Consider the following 180-residue polypeptide: ATP synthase subunit delta (180 aa).

This sequence belongs to the ATPase delta chain family. As to quaternary structure, F-type ATPases have 2 components, F(1) - the catalytic core - and F(0) - the membrane proton channel. F(1) has five subunits: alpha(3), beta(3), gamma(1), delta(1), epsilon(1). F(0) has three main subunits: a(1), b(2) and c(10-14). The alpha and beta chains form an alternating ring which encloses part of the gamma chain. F(1) is attached to F(0) by a central stalk formed by the gamma and epsilon chains, while a peripheral stalk is formed by the delta and b chains.

It localises to the cell membrane. Its function is as follows. F(1)F(0) ATP synthase produces ATP from ADP in the presence of a proton or sodium gradient. F-type ATPases consist of two structural domains, F(1) containing the extramembraneous catalytic core and F(0) containing the membrane proton channel, linked together by a central stalk and a peripheral stalk. During catalysis, ATP synthesis in the catalytic domain of F(1) is coupled via a rotary mechanism of the central stalk subunits to proton translocation. In terms of biological role, this protein is part of the stalk that links CF(0) to CF(1). It either transmits conformational changes from CF(0) to CF(1) or is implicated in proton conduction. The sequence is that of ATP synthase subunit delta from Bacillus cereus (strain B4264).